Reading from the N-terminus, the 232-residue chain is Ribose-5-phosphate isomerase A (232 aa).

Substrate-binding positions include 28 to 31 (TGST), 83 to 86 (DGAD), and 96 to 99 (KGGG). Glu105 acts as the Proton acceptor in catalysis. Lys123 provides a ligand contact to substrate.

Belongs to the ribose 5-phosphate isomerase family. As to quaternary structure, homodimer.

The catalysed reaction is aldehydo-D-ribose 5-phosphate = D-ribulose 5-phosphate. It participates in carbohydrate degradation; pentose phosphate pathway; D-ribose 5-phosphate from D-ribulose 5-phosphate (non-oxidative stage): step 1/1. Functionally, catalyzes the reversible conversion of ribose-5-phosphate to ribulose 5-phosphate. This chain is Ribose-5-phosphate isomerase A, found in Rhizobium etli (strain CIAT 652).